The chain runs to 60 residues: Large ribosomal subunit protein bL32B (60 aa).

Positions 1 to 19 (MAVPKRKMSRANTRHRRSQ) are enriched in basic residues. The interval 1-20 (MAVPKRKMSRANTRHRRSQW) is disordered.

The protein belongs to the bacterial ribosomal protein bL32 family.

In Saccharopolyspora erythraea (strain ATCC 11635 / DSM 40517 / JCM 4748 / NBRC 13426 / NCIMB 8594 / NRRL 2338), this protein is Large ribosomal subunit protein bL32B.